The following is a 445-amino-acid chain: Disintegrin and metalloproteinase domain-containing protein 18 (445 aa).

Residues 1 to 106 (IYRKHLKYIG…LDMQCLGDLS (106 aa)) enclose the Peptidase M12B domain. Residues 1-409 (IYRKHLKYIG…TKRLSQHADS (409 aa)) lie on the Extracellular side of the membrane. 3 disulfide bridges follow: Cys-18/Cys-101, Cys-60/Cys-85, and Cys-62/Cys-67. Asn-19 and Asn-59 each carry an N-linked (GlcNAc...) asparagine glycan. N-linked (GlcNAc...) asparagine glycans are attached at residues Asn-84 and Asn-131. Residues 113–202 (QSVCGNGIVE…HCVPDTFALD (90 aa)) enclose the Disintegrin domain. The cysteines at positions 173 and 194 are disulfide-linked. Residues Asn-333 and Asn-340 are each glycosylated (N-linked (GlcNAc...) asparagine). In terms of domain architecture, EGF-like spans 342-376 (TGNDCNAAKKCKGNGICNNFGHCQCFPDYRPPDCN). 3 cysteine pairs are disulfide-bonded: Cys-346/Cys-358, Cys-352/Cys-364, and Cys-366/Cys-375. A helical transmembrane segment spans residues 410-430 (WVILGFFIFLPFIMTLFLGII). At 431–445 (KRNERKIVPQKEQER) the chain is on the cytoplasmic side.

Post-translationally, the prodomain and the metalloprotease-like domain are cleaved during the epididymal maturation of the spermatozoa. In terms of tissue distribution, expressed specifically in testis.

The protein localises to the membrane. Sperm surface membrane protein that may be involved in spermatogenesis and fertilization. This is a non catalytic metalloprotease-like protein. The chain is Disintegrin and metalloproteinase domain-containing protein 18 (Adam18) from Rattus norvegicus (Rat).